The sequence spans 469 residues: Proline--tRNA ligase (469 aa).

The protein belongs to the class-II aminoacyl-tRNA synthetase family. ProS type 3 subfamily. Homodimer.

The protein resides in the cytoplasm. It catalyses the reaction tRNA(Pro) + L-proline + ATP = L-prolyl-tRNA(Pro) + AMP + diphosphate. Catalyzes the attachment of proline to tRNA(Pro) in a two-step reaction: proline is first activated by ATP to form Pro-AMP and then transferred to the acceptor end of tRNA(Pro). The sequence is that of Proline--tRNA ligase from Methanosphaera stadtmanae (strain ATCC 43021 / DSM 3091 / JCM 11832 / MCB-3).